A 186-amino-acid chain; its full sequence is Ribosome-recycling factor (186 aa).

It belongs to the RRF family.

Its subcellular location is the cytoplasm. Functionally, responsible for the release of ribosomes from messenger RNA at the termination of protein biosynthesis. May increase the efficiency of translation by recycling ribosomes from one round of translation to another. In Cupriavidus metallidurans (strain ATCC 43123 / DSM 2839 / NBRC 102507 / CH34) (Ralstonia metallidurans), this protein is Ribosome-recycling factor.